Consider the following 335-residue polypeptide: 2-acylglycerol O-acyltransferase 2-B (335 aa).

A run of 2 helical transmembrane segments spans residues 24 to 44 (WAVS…LLLF) and 104 to 124 (YIMG…NFCT). Residue Asn-206 is glycosylated (N-linked (GlcNAc...) asparagine).

Belongs to the diacylglycerol acyltransferase family.

Its subcellular location is the endoplasmic reticulum membrane. It is found in the cytoplasm. It localises to the perinuclear region. It catalyses the reaction a 2-acylglycerol + an acyl-CoA = a 1,2-diacylglycerol + CoA. The enzyme catalyses a 2-acylglycerol + an acyl-CoA = a 1,2-diacyl-sn-glycerol + CoA. It carries out the reaction a 2-acylglycerol + an acyl-CoA = a 2,3-diacyl-sn-glycerol + CoA. The catalysed reaction is a 1-acylglycerol + an acyl-CoA = a 1,2-diacylglycerol + CoA. It catalyses the reaction a 1-acylglycerol + an acyl-CoA = a 1,3-diacylglycerol + CoA. The enzyme catalyses 1-O-alkylglycerol + an acyl-CoA = 1-O-alkyl-3-acylglycerol + CoA. It carries out the reaction an acyl-CoA + a 1,2-diacyl-sn-glycerol = a triacyl-sn-glycerol + CoA. It functions in the pathway glycerolipid metabolism; triacylglycerol biosynthesis. Catalyzes the formation of diacylglycerol from 2-monoacylglycerol and fatty acyl-CoA. Its function is as follows. Involved in glycerolipid synthesis and lipid metabolism. Catalyzes the formation of diacylglycerol, the precursor of triacylglycerol, by transferring the acyl chain of a fatty acyl-CoA to a monoacylglycerol. Plays a central role in absorption of dietary fat in the small intestine by catalyzing the resynthesis of triacylglycerol in enterocytes. Has a preference toward monoacylglycerols containing unsaturated fatty acids in an order of C18:3 &gt; C18:2 &gt; C18:1 &gt; C18:0 at sn-2. Able to use 1-monoalkylglycerol (1-MAkG, 1-O-alkylglycerol) as an acyl acceptor for the synthesis of monoalkyl-monoacylglycerol (MAMAG, 1-O-alkyl-3-acylglycerol or 1-O-alkyl-2-acylglycerol) and subsequently, with lower efficiency, may add another acyl chain producing monoalkyl-diacylglycerol (MADAG, 1-O-alkyl-2,3-diacylglycerol). Possesses weak but significant activity with diacylglycerol as substrate, producing triacylglycerol (triacyl-sn-glycerol). The polypeptide is 2-acylglycerol O-acyltransferase 2-B (mogat2-b) (Xenopus laevis (African clawed frog)).